A 222-amino-acid chain; its full sequence is Vesicle-associated membrane protein 724 (222 aa).

Over 1-197 the chain is Cytoplasmic; that stretch reads MGQESFIYSF…LWYQNMKIKL (197 aa). Residues 10 to 115 enclose the Longin domain; sequence FVARGTMILA…SLNKEFGPVM (106 aa). The v-SNARE coiled-coil homology domain occupies 131-191; that stretch reads KLIKVKAQVS…TQVRRKLWYQ (61 aa). The helical; Anchor for type IV membrane protein transmembrane segment at 198–218 threads the bilayer; the sequence is VVLGILLLLVLIIWISVCHGF. Residues 219–222 lie on the Vesicular side of the membrane; the sequence is NCTD.

It belongs to the synaptobrevin family. Expressed in flowers, leaves, stems and roots.

The protein resides in the cell membrane. Its subcellular location is the early endosome membrane. Involved in the targeting and/or fusion of transport vesicles to their target membrane. The protein is Vesicle-associated membrane protein 724 of Arabidopsis thaliana (Mouse-ear cress).